A 486-amino-acid polypeptide reads, in one-letter code: Cephamycin export protein CmcT (486 aa).

The next 14 membrane-spanning stretches (helical) occupy residues 24-44 (VLAC…TVAL), 56-76 (ASLQ…LLFG), 88-108 (VFLG…LATS), 121-141 (AGAA…FAEG), 153-173 (AVAL…TEFL), 178-198 (VLLV…RVLA), 210-230 (LDLP…LGVS), 241-261 (AVAV…VVEA), 284-304 (LAML…TLSM), 317-337 (LGFV…VPWL), 345-365 (VLIA…SLLT), 369-389 (AYLG…GLVG), 418-438 (FGGA…TSGS), and 450-470 (FVGI…LPAL).

The protein belongs to the major facilitator superfamily.

The protein resides in the cell membrane. Functionally, involved in cephamycin export. In Amycolatopsis lactamdurans (Nocardia lactamdurans), this protein is Cephamycin export protein CmcT (cmcT).